Consider the following 343-residue polypeptide: Peptide methionine sulfoxide reductase msrA/msrB (343 aa).

The interval 21–174 (KVIYLAGGCF…PNGYCHIDLK (154 aa)) is peptide methionine sulfoxide reductase A. Residue Cys-29 is the Cysteine sulfenic acid (-SOH) intermediate of the active site. The MsrB domain maps to 191–314 (DEVLKKKLTQ…NSASLRFIPL (124 aa)). The Nucleophile role is filled by Cys-303.

The protein in the N-terminal section; belongs to the MsrA Met sulfoxide reductase family. In the C-terminal section; belongs to the MsrB Met sulfoxide reductase family.

The enzyme catalyses L-methionyl-[protein] + [thioredoxin]-disulfide + H2O = L-methionyl-(S)-S-oxide-[protein] + [thioredoxin]-dithiol. It catalyses the reaction [thioredoxin]-disulfide + L-methionine + H2O = L-methionine (S)-S-oxide + [thioredoxin]-dithiol. The catalysed reaction is L-methionyl-[protein] + [thioredoxin]-disulfide + H2O = L-methionyl-(R)-S-oxide-[protein] + [thioredoxin]-dithiol. In terms of biological role, has an important function as a repair enzyme for proteins that have been inactivated by oxidation. Catalyzes the reversible oxidation-reduction of methionine sulfoxide in proteins to methionine. The protein is Peptide methionine sulfoxide reductase msrA/msrB of Enterococcus faecalis (Streptococcus faecalis).